We begin with the raw amino-acid sequence, 158 residues long: Protein Smg homolog (158 aa).

This sequence belongs to the Smg family.

This Herminiimonas arsenicoxydans protein is Protein Smg homolog.